The chain runs to 246 residues: MFAAIASGNPLQLSVEVPNSNGLQHTIVLSRTKPKLYSHITLFILPNVTFPQDYIATVYFKLSPQEEFKLFGYLSSEKPSAIFKVQIPSSKKDAGDTSDGLGEIDMDVDDGSGAADPFTDTNGSSSNNISELIIGISIEPREQGMMKLEEWKASMNAEAQKNNSLILSRPNLGIIRNITTAGQLAQVYPSLTQELAAKIVQHAYNYLSGFLDAQGNVPIKRFDTWWDKFRNRLANDGTFLDEVTKN.

It belongs to the OPI10 family.

The protein resides in the cytoplasm. The protein localises to the nucleus. In terms of biological role, involved in phospholipid biosynthesis. This is Protein OPI10 (OPI10) from Saccharomyces cerevisiae (strain ATCC 204508 / S288c) (Baker's yeast).